A 227-amino-acid polypeptide reads, in one-letter code: (S)-2-haloacid dehalogenase (227 aa).

The active-site Nucleophile is D10. An (S)-2-haloacid-binding positions include 11 to 12 (LY), R41, and 118 to 119 (SN). The segment at 175–180 (SSNAWD) is important for catalytic activity.

Belongs to the HAD-like hydrolase superfamily. S-2-haloalkanoic acid dehalogenase family. As to quaternary structure, homotetramer.

The enzyme catalyses an (S)-2-haloacid + H2O = a (2R)-2-hydroxycarboxylate + a halide anion + H(+). The catalysed reaction is (S)-2-chloropropanoate + H2O = (R)-lactate + chloride + H(+). In terms of biological role, catalyzes the hydrolytic dehalogenation of small (S)-2-haloalkanoic acids to yield the corresponding (R)-2-hydroxyalkanoic acids. Acts on acids of short chain lengths, C(2) to C(4), with inversion of configuration at C-2. Active with 2-halogenated carboxylic acids and converts only the S-isomer (or L-isomer) of 2-chloropropionic acid with inversion of configuration to produce R-lactate (or D-isomer). The sequence is that of (S)-2-haloacid dehalogenase from Pseudomonas putida (Arthrobacter siderocapsulatus).